The following is an 87-amino-acid chain: Cyclin-dependent kinases regulatory subunit 1 (87 aa).

It belongs to the CKS family. In terms of assembly, interacts with CDKA-1. Interacts with CDKB1-1, CDKB1-2 and CDKB2-1. Interacts with CYCD2-1 and At4g14310.

Its function is as follows. Associates with cyclin-dependent kinases (CDKs) and plays an essential role in the regulation of the cell cycle that affects plant growth rate. May inhibit both the G1/S and G2/M phases. In Arabidopsis thaliana (Mouse-ear cress), this protein is Cyclin-dependent kinases regulatory subunit 1 (CKS1).